The following is a 1833-amino-acid chain: Proteasome activator complex subunit 4A (1833 aa).

HEAT repeat units follow at residues Pro460–Cys504 and Asn983–Gly1022. The segment at Ser1095–Lys1122 is disordered. Residues Leu1111–Lys1122 are compositionally biased toward basic and acidic residues. HEAT repeat units follow at residues Leu1164 to Arg1202, Asp1344 to His1382, Ser1626 to Phe1664, and Ala1670 to Leu1708. The bromodomain-like (BRDL) stretch occupies residues Ser1640–Lys1728.

It belongs to the BLM10 family. As to quaternary structure, homodimer. Interacts with the 20S and 26S proteasomes.

Its subcellular location is the cytoplasm. The protein localises to the cytosol. It is found in the nucleus. The protein resides in the nucleus speckle. In terms of biological role, associated component of the proteasome that specifically recognizes acetylated histones and promotes ATP- and ubiquitin-independent degradation of core histones during DNA damage response. Recognizes and binds acetylated histones via its bromodomain-like (BRDL) region and activates the proteasome by opening the gated channel for substrate entry. Binds to the core proteasome via its C-terminus, which occupies the same binding sites as the proteasomal ATPases, opening the closed structure of the proteasome via an active gating mechanism. involved in DNA damage response in somatic cells: binds to acetylated histones and promotes degradation of histones. The sequence is that of Proteasome activator complex subunit 4A (psme4a) from Danio rerio (Zebrafish).